A 626-amino-acid polypeptide reads, in one-letter code: Putative L-type lectin-domain containing receptor kinase V.8 (626 aa).

The first 21 residues, 1 to 21, serve as a signal peptide directing secretion; that stretch reads MPSELKVLHIVLVLLYTLSSS. The segment at 22 to 212 is legume-lectin like; that stretch reads TYNSNGNWTL…SIGAFHYMLS (191 aa). Residues 22 to 245 lie on the Extracellular side of the membrane; the sequence is TYNSNGNWTL…PKKSSDRTKK (224 aa). N-linked (GlcNAc...) asparagine glycosylation is found at N28, N59, N112, and N162. The helical transmembrane segment at 246-266 threads the bilayer; that stretch reads ILAVCLTLAVFAVFVASGICF. The Cytoplasmic segment spans residues 267-626; the sequence is VFYTRHKKVK…LTNSFLSHGR (360 aa). Residues 303–562 enclose the Protein kinase domain; that stretch reads FKEKQLLGKG…GLLCAHHTEL (260 aa). ATP is bound by residues 309-317 and K332; that span reads LGKGGFGQV. The Proton acceptor role is filled by D429.

This sequence in the C-terminal section; belongs to the protein kinase superfamily. Ser/Thr protein kinase family. It in the N-terminal section; belongs to the leguminous lectin family.

It is found in the cell membrane. The enzyme catalyses L-seryl-[protein] + ATP = O-phospho-L-seryl-[protein] + ADP + H(+). It catalyses the reaction L-threonyl-[protein] + ATP = O-phospho-L-threonyl-[protein] + ADP + H(+). In Arabidopsis thaliana (Mouse-ear cress), this protein is Putative L-type lectin-domain containing receptor kinase V.8 (LECRK58).